The sequence spans 196 residues: ATP-dependent Clp protease proteolytic subunit (196 aa).

The active-site Nucleophile is serine 101. Histidine 126 is a catalytic residue.

Belongs to the peptidase S14 family. In terms of assembly, component of the chloroplastic Clp protease core complex.

It is found in the plastid. The protein resides in the chloroplast stroma. The enzyme catalyses Hydrolysis of proteins to small peptides in the presence of ATP and magnesium. alpha-casein is the usual test substrate. In the absence of ATP, only oligopeptides shorter than five residues are hydrolyzed (such as succinyl-Leu-Tyr-|-NHMec, and Leu-Tyr-Leu-|-Tyr-Trp, in which cleavage of the -Tyr-|-Leu- and -Tyr-|-Trp bonds also occurs).. Cleaves peptides in various proteins in a process that requires ATP hydrolysis. Has a chymotrypsin-like activity. Plays a major role in the degradation of misfolded proteins. In Gossypium hirsutum (Upland cotton), this protein is ATP-dependent Clp protease proteolytic subunit.